The following is a 315-amino-acid chain: Olfactory receptor 8J2 (315 aa).

The Extracellular portion of the chain corresponds to 1–24; sequence MASGNLTWVTEFILVGVSDDPELQ. The N-linked (GlcNAc...) asparagine glycan is linked to asparagine 5. The helical transmembrane segment at 25 to 45 threads the bilayer; sequence IPLFLVFLVLYLLTVAGNLGI. Residues 46–57 lie on the Cytoplasmic side of the membrane; it reads ITLTSVDPQLQT. A helical transmembrane segment spans residues 58–78; it reads PMYFFLRHLAIINLCNSTVVA. Topologically, residues 79–97 are extracellular; sequence PKMLVNFLVTKKTISYYGC. A disulfide bridge links cysteine 97 with cysteine 179. A helical membrane pass occupies residues 98-118; it reads AAQLGGFLVFIVAEIFTLAAM. Residues 119 to 143 are Cytoplasmic-facing; sequence AYDRYVAIWSPLLYAVVVSPKVCRL. The helical transmembrane segment at 144 to 164 threads the bilayer; sequence LVSLTYLQSLITALTVSSCVF. Residues 165 to 205 lie on the Extracellular side of the membrane; it reads SVSYCSSNIINHFYCDDVPLLALSCSDTYIPETAVFIFSGT. Residues 206-226 traverse the membrane as a helical segment; the sequence is NLLFSMIVVLISYFNIVITIL. The Cytoplasmic portion of the chain corresponds to 227–239; sequence RIRSSEGRQKAFS. The helical transmembrane segment at 240-260 threads the bilayer; the sequence is TCASHMIAVVVFYGTLLFMYL. At 261–271 the chain is on the extracellular side; the sequence is QPRSNHSLDTD. Asparagine 265 carries N-linked (GlcNAc...) asparagine glycosylation. A helical transmembrane segment spans residues 272-292; sequence KMASVFYTLVIPVLNPLIYSL. Topologically, residues 293–315 are cytoplasmic; it reads RNKNVKDALKRFLDNPCRSLKLM.

This sequence belongs to the G-protein coupled receptor 1 family.

The protein localises to the membrane. Odorant receptor. In Homo sapiens (Human), this protein is Olfactory receptor 8J2 (OR8J2).